Consider the following 415-residue polypeptide: Gamma-glutamyl phosphate reductase (415 aa).

The protein belongs to the gamma-glutamyl phosphate reductase family.

Its subcellular location is the cytoplasm. It carries out the reaction L-glutamate 5-semialdehyde + phosphate + NADP(+) = L-glutamyl 5-phosphate + NADPH + H(+). Its pathway is amino-acid biosynthesis; L-proline biosynthesis; L-glutamate 5-semialdehyde from L-glutamate: step 2/2. Functionally, catalyzes the NADPH-dependent reduction of L-glutamate 5-phosphate into L-glutamate 5-semialdehyde and phosphate. The product spontaneously undergoes cyclization to form 1-pyrroline-5-carboxylate. In Xylella fastidiosa (strain 9a5c), this protein is Gamma-glutamyl phosphate reductase.